Reading from the N-terminus, the 104-residue chain is L-rhamnose mutarotase (104 aa).

Tyr-18 is a binding site for substrate. The active-site Proton donor is the His-22. Residues Tyr-41 and 76–77 each bind substrate; that span reads WW.

It belongs to the rhamnose mutarotase family. Homodimer.

The protein resides in the cytoplasm. The enzyme catalyses alpha-L-rhamnose = beta-L-rhamnose. It participates in carbohydrate metabolism; L-rhamnose metabolism. Functionally, involved in the anomeric conversion of L-rhamnose. The polypeptide is L-rhamnose mutarotase (Salmonella heidelberg (strain SL476)).